A 338-amino-acid chain; its full sequence is (-)-alpha-amorphene synthase ((2E,6E)-farnesyl diphosphate cyclizing) (338 aa).

Mg(2+)-binding residues include Asp105 and Glu109. Residues Asp105–Glu109 carry the DDXXE motif motif. Arg196 contributes to the substrate binding site. A Mg(2+)-binding site is contributed by Ser246. Lys249 serves as a coordination point for substrate. Glu250 serves as a coordination point for Mg(2+). Arg327–Tyr328 is a binding site for substrate.

This sequence belongs to the terpene synthase family. Mg(2+) is required as a cofactor.

The catalysed reaction is (2E,6E)-farnesyl diphosphate = (-)-alpha-amorphene + diphosphate. The protein operates within secondary metabolite biosynthesis; terpenoid biosynthesis. Catalyzes the conversion of (2E,6E)-farnesyl diphosphate (FPP) to yield the bicyclic sesquiterpene (1R,6S,7S)-(-)-alpha-amorphene via a probable 1,6-cyclization, which could involve the abstraction of the pyrophosphate from FPP to yield a (R)-bisabolyl cation. The only accepted substrate is (2E,6E)-farnesyl diphosphate (FPP). This Streptomyces viridochromogenes (strain DSM 40736 / JCM 4977 / BCRC 1201 / Tue 494) protein is (-)-alpha-amorphene synthase ((2E,6E)-farnesyl diphosphate cyclizing).